A 362-amino-acid polypeptide reads, in one-letter code: Myricetin 3'-O-methyltransferase 4 (362 aa).

An S-adenosyl-L-methionine-binding site is contributed by Asp-229. The active-site Proton acceptor is the His-267.

This sequence belongs to the class I-like SAM-binding methyltransferase superfamily. Cation-independent O-methyltransferase family. Homodimer. As to expression, mainly expressed in stem and petiole trichomes.

The catalysed reaction is myricetin + S-adenosyl-L-methionine = laricitrin + S-adenosyl-L-homocysteine + H(+). The protein operates within flavonoid metabolism. Functionally, flavonoid 3'-O-methyltransferase involved in the biosynthesis of polymethoxylated flavonoids natural products such as myricetin derivatives, aroma compounds possessing antioxidant properties and exhibiting pharmacological activities such as anti-carcinogen, anti-viral, anti-thrombotic, anti-diabetic, anti-atherosclerotic, and anti-inflammatory effects. Catalyzes S-adenosylmethionine-dependent regioselective 3'-O-methylation of flavonoids; active on various hydroxylated flavonoid substrates, including myricetin, thus producing 3'-methyl myricetin (laricitrin). The protein is Myricetin 3'-O-methyltransferase 4 of Solanum lycopersicum (Tomato).